The sequence spans 241 residues: Homeobox protein TGIF2LX (241 aa).

2 disordered regions span residues 1-58 and 127-207; these read MEAA…GNLP and GKGA…ELVS. The span at 10–39 shows a compositional bias: polar residues; that stretch reads ETQSPVQKDSPAKTQSPAQDTSIMSRNNAD. Residues 48 to 111 constitute a DNA-binding region (homeobox; TALE-type); it reads EHKKKRKGNL…INARRRILPD (64 aa).

It belongs to the TALE/TGIF homeobox family.

It localises to the nucleus. Functionally, may have a transcription role in testis. The polypeptide is Homeobox protein TGIF2LX (TGIF2LX) (Pan paniscus (Pygmy chimpanzee)).